A 253-amino-acid polypeptide reads, in one-letter code: Electron transfer flavoprotein subunit beta, mitochondrial (253 aa).

The protein belongs to the ETF beta-subunit/FixA family. As to quaternary structure, heterodimer of an alpha and a beta subunit. Requires FAD as cofactor. AMP serves as cofactor.

The protein localises to the mitochondrion matrix. In terms of biological role, the electron transfer flavoprotein serves as a specific electron acceptor for several dehydrogenases, including five acyl-CoA dehydrogenases, glutaryl-CoA and sarcosine dehydrogenase. It transfers the electrons to the main mitochondrial respiratory chain via ETF-ubiquinone oxidoreductase (ETF dehydrogenase). The polypeptide is Electron transfer flavoprotein subunit beta, mitochondrial (ETFB) (Oryza sativa subsp. indica (Rice)).